The sequence spans 439 residues: AT-hook motif nuclear-localized protein 13 (439 aa).

Disordered regions lie at residues 1-46 (MDSR…NSYN), 69-216 (QRLP…LGGT), and 342-439 (GRKQ…NSPQ). Composition is skewed to low complexity over residues 9–31 (QQQQ…QQQQ) and 79–95 (PHQP…PQQQ). The segment covering 109–120 (SPSSVAATQQHS) has biased composition (polar residues). Over residues 130 to 139 (VKKKRGRPRK) the composition is skewed to basic residues. The short motif at 131–139 (KKKRGRPRK) is the Bipartite nuclear localization signal element. Residues 131–143 (KKKRGRPRKYAAD) constitute a DNA-binding region (a.T hook 1). Gly residues-rich tracts occupy residues 143-152 (DGGGGGGGGS) and 171-183 (YGGG…GGDS). Positions 196–208 (KRNRGRPPGSGKK) form a DNA-binding region, a.T hook 2. The region spanning 217-359 (GGVGFTPHVI…GRAQNTPEPA (143 aa)) is the PPC domain. Positions 347–357 (QSAGRAQNTPE) are enriched in polar residues. Low complexity-rich tracts occupy residues 376–386 (SPRSQGQQHSS) and 403–416 (NNNN…FGNS). Polar residues predominate over residues 428-439 (MYQNLWPGNSPQ).

It is found in the nucleus. Functionally, transcription factor that specifically binds AT-rich DNA sequences related to the nuclear matrix attachment regions (MARs). The protein is AT-hook motif nuclear-localized protein 13 of Arabidopsis thaliana (Mouse-ear cress).